The primary structure comprises 186 residues: Mitoferrin-2A (186 aa).

The Solcar repeat unit spans residues 75-163 (SNVTTHMLAG…FACYEKLKKT (89 aa)). A run of 3 helical transmembrane segments spans residues 77–96 (VTTH…CLMY), 137–157 (RGLN…FACY), and 172–185 (GNSH…YSCP).

It belongs to the mitochondrial carrier (TC 2.A.29) family.

Its subcellular location is the mitochondrion inner membrane. The enzyme catalyses Fe(2+)(in) = Fe(2+)(out). In terms of biological role, mitochondrial iron transporter that mediates iron uptake. Probably required for heme synthesis of hemoproteins and Fe-S cluster assembly in non-erythroid cells. This Xenopus laevis (African clawed frog) protein is Mitoferrin-2A (slc25a28-a).